We begin with the raw amino-acid sequence, 119 residues long: Autophagy-related protein 8A (119 aa).

G117 carries the Phosphatidylethanolamine amidated glycine lipid modification. A propeptide spans 118–119 (removed in mature form); sequence SA.

It belongs to the ATG8 family. As to quaternary structure, interacts with ATG4. Post-translationally, the C-terminal 2 residues are removed by ATG4 to expose Gly-117 at the C-terminus. The C-terminal Gly is then amidated with phosphatidylethanolamine by an activating system similar to that for ubiquitin. Constitutively expressed.

The protein localises to the cytoplasmic vesicle. Its subcellular location is the autophagosome membrane. It is found in the vacuole membrane. The protein resides in the cytoplasm. It localises to the cytoskeleton. Ubiquitin-like modifier involved in cytoplasm to vacuole transport (Cvt) vesicles and autophagosomes formation. May mediate the delivery of the vesicles and autophagosomes to the vacuole via the microtubule cytoskeleton. In terms of biological role, ubiquitin-like modifier involved in autophagosomes formation. May mediate the delivery of the autophagosomes to the vacuole via the microtubule cytoskeleton. This chain is Autophagy-related protein 8A (ATG8A), found in Oryza sativa subsp. indica (Rice).